A 293-amino-acid polypeptide reads, in one-letter code: 4-hydroxy-tetrahydrodipicolinate synthase (293 aa).

Threonine 47 is a pyruvate binding site. Tyrosine 136 acts as the Proton donor/acceptor in catalysis. The Schiff-base intermediate with substrate role is filled by lysine 164. Isoleucine 206 contributes to the pyruvate binding site.

It belongs to the DapA family. In terms of assembly, homotetramer; dimer of dimers.

The protein resides in the cytoplasm. The enzyme catalyses L-aspartate 4-semialdehyde + pyruvate = (2S,4S)-4-hydroxy-2,3,4,5-tetrahydrodipicolinate + H2O + H(+). The protein operates within amino-acid biosynthesis; L-lysine biosynthesis via DAP pathway; (S)-tetrahydrodipicolinate from L-aspartate: step 3/4. Catalyzes the condensation of (S)-aspartate-beta-semialdehyde [(S)-ASA] and pyruvate to 4-hydroxy-tetrahydrodipicolinate (HTPA). The protein is 4-hydroxy-tetrahydrodipicolinate synthase of Listeria innocua serovar 6a (strain ATCC BAA-680 / CLIP 11262).